Here is a 323-residue protein sequence, read N- to C-terminus: o-succinylbenzoate synthase (323 aa).

The active-site Proton donor is the Lys134. Asp162, Glu191, and Asp214 together coordinate Mg(2+). Lys236 serves as the catalytic Proton acceptor.

It belongs to the mandelate racemase/muconate lactonizing enzyme family. MenC type 1 subfamily. The cofactor is a divalent metal cation.

The enzyme catalyses (1R,6R)-6-hydroxy-2-succinyl-cyclohexa-2,4-diene-1-carboxylate = 2-succinylbenzoate + H2O. It participates in quinol/quinone metabolism; 1,4-dihydroxy-2-naphthoate biosynthesis; 1,4-dihydroxy-2-naphthoate from chorismate: step 4/7. It functions in the pathway quinol/quinone metabolism; menaquinone biosynthesis. Converts 2-succinyl-6-hydroxy-2,4-cyclohexadiene-1-carboxylate (SHCHC) to 2-succinylbenzoate (OSB). This chain is o-succinylbenzoate synthase, found in Pectobacterium atrosepticum (strain SCRI 1043 / ATCC BAA-672) (Erwinia carotovora subsp. atroseptica).